The primary structure comprises 418 residues: MIFDKGNVEDFDKELWDAIHAEEERQEHHIELIASENMVSKAVMAAQGSVLTNKYAEGYPGNRYYGGTECVDIVETLAIERAKKLFGAAFANVQAHSGSQANAAAYMALIEAGDTVLGMDLAAGGHLTHGSPVNFSGKTYHFVGYSVDTDTEMLNYEAILEQAKAVQPKLIVAGASAYSRSIDFEKFRAIADHVGAYLMVDMAHIAGLVAAGVHPSPVPYAHIVTSTTHKTLRGPRGGLILTNDEALAKKINSAVFPGLQGGPLEHVIAAKAVAFKEALDPAFKDYAQAIIDNTAAMAAVFAQDDRFRLISGGTDNHVFLVDVTKVIANGKLAQNLLDEVNITLNKNAIPFETLSPFKTSGIRIGCAAITSRGMGVKESQTIARLIIKALVNHDQETILEEVRQEVRQLTDAFPLYKK.

Residues Leu-121 and 125 to 127 each bind (6S)-5,6,7,8-tetrahydrofolate; that span reads GHL. At Lys-230 the chain carries N6-(pyridoxal phosphate)lysine. Residue 355 to 357 coordinates (6S)-5,6,7,8-tetrahydrofolate; that stretch reads SPF.

Belongs to the SHMT family. In terms of assembly, homodimer. Requires pyridoxal 5'-phosphate as cofactor.

The protein localises to the cytoplasm. The enzyme catalyses (6R)-5,10-methylene-5,6,7,8-tetrahydrofolate + glycine + H2O = (6S)-5,6,7,8-tetrahydrofolate + L-serine. It functions in the pathway one-carbon metabolism; tetrahydrofolate interconversion. It participates in amino-acid biosynthesis; glycine biosynthesis; glycine from L-serine: step 1/1. Its function is as follows. Catalyzes the reversible interconversion of serine and glycine with tetrahydrofolate (THF) serving as the one-carbon carrier. This reaction serves as the major source of one-carbon groups required for the biosynthesis of purines, thymidylate, methionine, and other important biomolecules. Also exhibits THF-independent aldolase activity toward beta-hydroxyamino acids, producing glycine and aldehydes, via a retro-aldol mechanism. This is Serine hydroxymethyltransferase from Streptococcus pyogenes serotype M1.